A 133-amino-acid polypeptide reads, in one-letter code: Urease subunit beta (133 aa).

The disordered stretch occupies residues 106–133; that stretch reads VFRPNDSNQNAAVKNDAGEDNANKKGGK.

It belongs to the urease beta subunit family. In terms of assembly, heterotrimer of UreA (gamma), UreB (beta) and UreC (alpha) subunits. Three heterotrimers associate to form the active enzyme.

The protein resides in the cytoplasm. The catalysed reaction is urea + 2 H2O + H(+) = hydrogencarbonate + 2 NH4(+). The protein operates within nitrogen metabolism; urea degradation; CO(2) and NH(3) from urea (urease route): step 1/1. The protein is Urease subunit beta of Staphylococcus epidermidis (strain ATCC 12228 / FDA PCI 1200).